Reading from the N-terminus, the 204-residue chain is Protein-L-isoaspartate O-methyltransferase (204 aa).

It belongs to the methyltransferase superfamily. L-isoaspartyl/D-aspartyl protein methyltransferase family. As to quaternary structure, monomer.

It is found in the cytoplasm. It catalyses the reaction [protein]-L-isoaspartate + S-adenosyl-L-methionine = [protein]-L-isoaspartate alpha-methyl ester + S-adenosyl-L-homocysteine. Its function is as follows. Catalyzes the methyl esterification of L-isoaspartyl residues in peptides and proteins that result from spontaneous decomposition of normal L-aspartyl and L-asparaginyl residues. It plays a role in the repair and/or degradation of damaged proteins. The sequence is that of Protein-L-isoaspartate O-methyltransferase (pcm) from Rhizobium meliloti (strain 1021) (Ensifer meliloti).